Reading from the N-terminus, the 129-residue chain is Follitropin subunit beta (129 aa).

An N-terminal signal peptide occupies residues 1 to 18 (MKSVQFCFLFCCWRAICC). Cystine bridges form between Cys-21/Cys-69, Cys-35/Cys-84, Cys-38/Cys-122, Cys-46/Cys-100, Cys-50/Cys-102, and Cys-105/Cys-112. Asn-25 and Asn-42 each carry an N-linked (GlcNAc...) asparagine glycan.

Belongs to the glycoprotein hormones subunit beta family. As to quaternary structure, heterodimer. The active follitropin is a heterodimer composed of an alpha chain/CGA shared with other hormones and a unique beta chain/FSHB shown here.

The protein resides in the secreted. In terms of biological role, together with the alpha chain CGA constitutes follitropin, the follicle-stimulating hormone, and provides its biological specificity to the hormone heterodimer. Binds FSHR, a G protein-coupled receptor, on target cells to activate downstream signaling pathways. Follitropin is involved in follicle development and spermatogenesis in reproductive organs. The polypeptide is Follitropin subunit beta (FSHB) (Capra hircus (Goat)).